The sequence spans 109 residues: uncharacterized protein (109 aa).

The helical transmembrane segment at 29-49 threads the bilayer; that stretch reads ITIIITLVIIFIIFTLIILYF.

It localises to the membrane. This is an uncharacterized protein from Sputnik virophage.